Consider the following 241-residue polypeptide: 1-(5-phosphoribosyl)-5-[(5-phosphoribosylamino)methylideneamino] imidazole-4-carboxamide isomerase (241 aa).

Aspartate 10 acts as the Proton acceptor in catalysis. Aspartate 129 (proton donor) is an active-site residue.

This sequence belongs to the HisA/HisF family.

It is found in the cytoplasm. The catalysed reaction is 1-(5-phospho-beta-D-ribosyl)-5-[(5-phospho-beta-D-ribosylamino)methylideneamino]imidazole-4-carboxamide = 5-[(5-phospho-1-deoxy-D-ribulos-1-ylimino)methylamino]-1-(5-phospho-beta-D-ribosyl)imidazole-4-carboxamide. It participates in amino-acid biosynthesis; L-histidine biosynthesis; L-histidine from 5-phospho-alpha-D-ribose 1-diphosphate: step 4/9. This is 1-(5-phosphoribosyl)-5-[(5-phosphoribosylamino)methylideneamino] imidazole-4-carboxamide isomerase from Salinispora tropica (strain ATCC BAA-916 / DSM 44818 / JCM 13857 / NBRC 105044 / CNB-440).